A 133-amino-acid polypeptide reads, in one-letter code: Ribonuclease P protein component (133 aa).

Positions 114–133 (RSRPTPEEKSEPAGVDSTDA) are disordered.

Belongs to the RnpA family. Consists of a catalytic RNA component (M1 or rnpB) and a protein subunit.

The enzyme catalyses Endonucleolytic cleavage of RNA, removing 5'-extranucleotides from tRNA precursor.. RNaseP catalyzes the removal of the 5'-leader sequence from pre-tRNA to produce the mature 5'-terminus. It can also cleave other RNA substrates such as 4.5S RNA. The protein component plays an auxiliary but essential role in vivo by binding to the 5'-leader sequence and broadening the substrate specificity of the ribozyme. The chain is Ribonuclease P protein component from Pseudomonas syringae pv. tomato (strain ATCC BAA-871 / DC3000).